Reading from the N-terminus, the 303-residue chain is Acetaldehyde dehydrogenase 2 (303 aa).

The active-site Acyl-thioester intermediate is the Cys-130. NAD(+) is bound by residues 161 to 169 (SVGPGTRKN) and Asn-272.

The protein belongs to the acetaldehyde dehydrogenase family.

It catalyses the reaction acetaldehyde + NAD(+) + CoA = acetyl-CoA + NADH + H(+). The chain is Acetaldehyde dehydrogenase 2 from Burkholderia vietnamiensis (strain G4 / LMG 22486) (Burkholderia cepacia (strain R1808)).